A 483-amino-acid polypeptide reads, in one-letter code: Glutamyl-tRNA(Gln) amidotransferase subunit A (483 aa).

Residues K76 and S151 each act as charge relay system in the active site. S175 functions as the Acyl-ester intermediate in the catalytic mechanism.

Belongs to the amidase family. GatA subfamily. In terms of assembly, heterotrimer of A, B and C subunits.

It catalyses the reaction L-glutamyl-tRNA(Gln) + L-glutamine + ATP + H2O = L-glutaminyl-tRNA(Gln) + L-glutamate + ADP + phosphate + H(+). In terms of biological role, allows the formation of correctly charged Gln-tRNA(Gln) through the transamidation of misacylated Glu-tRNA(Gln) in organisms which lack glutaminyl-tRNA synthetase. The reaction takes place in the presence of glutamine and ATP through an activated gamma-phospho-Glu-tRNA(Gln). The chain is Glutamyl-tRNA(Gln) amidotransferase subunit A from Azotobacter vinelandii (strain DJ / ATCC BAA-1303).